The following is a 121-amino-acid chain: Small ribosomal subunit protein uS13 (121 aa).

The disordered stretch occupies residues 91 to 121; it reads HRKGLPMRGQRTRTNARTRKGPRKAGVALKK.

It belongs to the universal ribosomal protein uS13 family. Part of the 30S ribosomal subunit. Forms a loose heterodimer with protein S19. Forms two bridges to the 50S subunit in the 70S ribosome.

Its function is as follows. Located at the top of the head of the 30S subunit, it contacts several helices of the 16S rRNA. In the 70S ribosome it contacts the 23S rRNA (bridge B1a) and protein L5 of the 50S subunit (bridge B1b), connecting the 2 subunits; these bridges are implicated in subunit movement. Contacts the tRNAs in the A and P-sites. The chain is Small ribosomal subunit protein uS13 from Cupriavidus necator (strain ATCC 17699 / DSM 428 / KCTC 22496 / NCIMB 10442 / H16 / Stanier 337) (Ralstonia eutropha).